The following is a 291-amino-acid chain: ATP synthase gamma chain (291 aa).

The protein belongs to the ATPase gamma chain family. As to quaternary structure, F-type ATPases have 2 components, CF(1) - the catalytic core - and CF(0) - the membrane proton channel. CF(1) has five subunits: alpha(3), beta(3), gamma(1), delta(1), epsilon(1). CF(0) has three main subunits: a, b and c.

It localises to the cell inner membrane. Produces ATP from ADP in the presence of a proton gradient across the membrane. The gamma chain is believed to be important in regulating ATPase activity and the flow of protons through the CF(0) complex. The sequence is that of ATP synthase gamma chain from Neisseria meningitidis serogroup C / serotype 2a (strain ATCC 700532 / DSM 15464 / FAM18).